A 151-amino-acid polypeptide reads, in one-letter code: NAD(P)H-quinone oxidoreductase subunit N (151 aa).

Belongs to the complex I NdhN subunit family. In terms of assembly, NDH-1 can be composed of about 15 different subunits; different subcomplexes with different compositions have been identified which probably have different functions.

The protein resides in the cellular thylakoid membrane. It carries out the reaction a plastoquinone + NADH + (n+1) H(+)(in) = a plastoquinol + NAD(+) + n H(+)(out). It catalyses the reaction a plastoquinone + NADPH + (n+1) H(+)(in) = a plastoquinol + NADP(+) + n H(+)(out). Functionally, NDH-1 shuttles electrons from an unknown electron donor, via FMN and iron-sulfur (Fe-S) centers, to quinones in the respiratory and/or the photosynthetic chain. The immediate electron acceptor for the enzyme in this species is believed to be plastoquinone. Couples the redox reaction to proton translocation, and thus conserves the redox energy in a proton gradient. Cyanobacterial NDH-1 also plays a role in inorganic carbon-concentration. The chain is NAD(P)H-quinone oxidoreductase subunit N from Acaryochloris marina (strain MBIC 11017).